The chain runs to 217 residues: Adenylate kinase (217 aa).

ATP is bound at residue 10–15 (GAGKGT). The segment at 30-59 (STGDIFRSNIKNGTELGRKAKEYIDKGLLV) is NMP. AMP is bound by residues Thr-31, Arg-36, 57–59 (LLV), 85–88 (GFPR), and Gln-92. The segment at 126-163 (GRRVCSKCGMSYHIVYNQPKVENICDSCNGELIQRDDD) is LID. Position 127 (Arg-127) interacts with ATP. Zn(2+) contacts are provided by Cys-130 and Cys-133. An ATP-binding site is contributed by 136-137 (SY). Zn(2+) is bound by residues Cys-150 and Cys-153. AMP is bound by residues Arg-160 and Arg-171. Glu-199 provides a ligand contact to ATP.

It belongs to the adenylate kinase family. As to quaternary structure, monomer.

The protein resides in the cytoplasm. It catalyses the reaction AMP + ATP = 2 ADP. Its pathway is purine metabolism; AMP biosynthesis via salvage pathway; AMP from ADP: step 1/1. Functionally, catalyzes the reversible transfer of the terminal phosphate group between ATP and AMP. Plays an important role in cellular energy homeostasis and in adenine nucleotide metabolism. This is Adenylate kinase from Acetivibrio thermocellus (strain ATCC 27405 / DSM 1237 / JCM 9322 / NBRC 103400 / NCIMB 10682 / NRRL B-4536 / VPI 7372) (Clostridium thermocellum).